Here is a 123-residue protein sequence, read N- to C-terminus: Large ribosomal subunit protein uL18 (123 aa).

Belongs to the universal ribosomal protein uL18 family. As to quaternary structure, part of the 50S ribosomal subunit; part of the 5S rRNA/L5/L18/L25 subcomplex. Contacts the 5S and 23S rRNAs.

Its function is as follows. This is one of the proteins that bind and probably mediate the attachment of the 5S RNA into the large ribosomal subunit, where it forms part of the central protuberance. The polypeptide is Large ribosomal subunit protein uL18 (Symbiobacterium thermophilum (strain DSM 24528 / JCM 14929 / IAM 14863 / T)).